A 264-amino-acid polypeptide reads, in one-letter code: tRNA (guanine-N(7)-)-methyltransferase (264 aa).

Positions 1-39 (MIHDDDPNAPGAPHDDATAAPASATRAAPAAGDDDDANP) are disordered. A compositionally biased stretch (low complexity) spans 18–31 (TAAPASATRAAPAA). Residues Glu94, Glu119, Asp146, and Asp169 each coordinate S-adenosyl-L-methionine. The active site involves Asp169. Substrate-binding positions include Lys173, Asp205, and 240–243 (TKFE).

Belongs to the class I-like SAM-binding methyltransferase superfamily. TrmB family.

The enzyme catalyses guanosine(46) in tRNA + S-adenosyl-L-methionine = N(7)-methylguanosine(46) in tRNA + S-adenosyl-L-homocysteine. It participates in tRNA modification; N(7)-methylguanine-tRNA biosynthesis. Its function is as follows. Catalyzes the formation of N(7)-methylguanine at position 46 (m7G46) in tRNA. The polypeptide is tRNA (guanine-N(7)-)-methyltransferase (Burkholderia mallei (strain ATCC 23344)).